The primary structure comprises 281 residues: Short neuropeptide F (281 aa).

The signal sequence occupies residues 1 to 30 (MFHLKRELSQGCALALICLVSLQMQQPAQA). A propeptide spanning residues 31 to 64 (EVSSAQGTPLSNLYDNLLQREYAGPVVFPNHQVE) is cleaved from the precursor. Phenylalanine amide is present on residues Phe77 and Phe111. Positions 115-165 (DPSLPQMRRTAYDDLLERELTLNSQQQQQQLGTEPDSDLGADYDGLYERVV) are excised as a propeptide. Positions 137–156 (NSQQQQQQLGTEPDSDLGAD) are disordered. The residue at position 173 (Trp173) is a Tryptophan amide. A propeptide spanning residues 176–246 (SVPQFEANNA…NDTSEFQREV (71 aa)) is cleaved from the precursor. Positions 226–281 (ANDEDTDTDLNNDTSEFQREVRKPMRLRWGRSTGKAPSEQKHTPEETSSIPPKTQN) are disordered. Trp254 is subject to Tryptophan amide. The propeptide occupies 257–281 (STGKAPSEQKHTPEETSSIPPKTQN). Positions 271-281 (ETSSIPPKTQN) are enriched in polar residues.

This sequence belongs to the NPY family. Stage 17 embryos show expression in the two brain hemispheres (neural cells located in the dorsal posterior region), the connected ventral ganglion (pairs of neural cells along the ventral midline) and the peripheral nervous system (expressed in the antennal-maxillary sensory cells). In the brain hemispheres of the feeding third instar larva, expression in neural cells is located in the dorsal-anterior region of the protocerebrum. In the larval ventral ganglion, expression is seen in the neural cells located in the subesophagial region, along the ventral midline and in thoracic and abdominal segments. In the adult brain, expression is seen in the medulla and the mushroom body calyx (at protein level).

The protein resides in the secreted. In terms of biological role, plays a role in controlling food intake and regulating body size. The polypeptide is Short neuropeptide F (sNPF) (Drosophila melanogaster (Fruit fly)).